Here is an 848-residue protein sequence, read N- to C-terminus: MPGPRPRKGPKTSGQGAETAKQLGLFVEFNPEDMLLGVDETEDDGDLEAELLALTGETASRSRKPAPKGQAPLPMAHIEKLAADCMRDVEEDEEEEGLEDDADLLTELQEVLGEDEEAGLLDGSEAASPDLCEEKTWDNTELPVEQAACQQAVPAAAQAGGPRGLQALLEERIRNYREAAASAKEAGEAAKARRCERGLKTLQSQLATVRKGGKICEDEIPPPVALGKRPPAPQERAIKNPEIDSPGPCAMEPGNLSQPESSLPAIAPLPDSDPDPQALLLARQREYKAAALDAKRAGDLDRARELMRIGKRFGTVLEALEKGQPVDLSGMPPAPADLKALPQASKASSATQGLSPAVEQMQPVMASDLPATPVAPAEPTTVLDALQQRLNKYREAGIQARANGDERKARMHDRIAKQYQDAVRAHQAGQKVDFAELPVPPGFPPIPGLEPRKGSEQDSVAATLATAQKLASEDAALVDDDEESDTPAQAPLAKKPAQTLVSPSHLLTEPKASSSKESLSPSVREQVTLLEARKLQYQRAALQAKRRQDLEQAKSHLRVAKSLEAQIIQARAGQPIDLSKVPSPLTDEEGDFILIHHEDLRLSQKAEEVYAQLQKMLQEQQAKCLLFSKQYMHQGNVAETTRFERLAEDRKKQLEILQLAQAQGLDPPSHHFELKTFQTVRIFSELNSTEMHLIIVRGMNLPAPPGVTPDDLDAFVRFEFHYPNSDQAQKSKTAVVKNTNSPEFEQVFKLNINRNHRGFRRVIQSKGIKFEIFHKGSFFRSDKLVGTAHLKLERLEKECEIREIMEVLDGRKPTGGKLEVKVRLREPLSSQDVQTVTENWLVLEPRGL.

Residues 1 to 10 show a composition bias toward basic residues; the sequence is MPGPRPRKGP. 2 disordered regions span residues 1–21 and 53–75; these read MPGP…ETAK and ALTG…PLPM. Residues 165–193 are a coiled coil; that stretch reads LQALLEERIRNYREAAASAKEAGEAAKAR. Disordered regions lie at residues 217-276, 326-353, 433-460, and 476-523; these read EDEI…DPDP, VDLS…ATQG, DFAE…QDSV, and ALVD…SPSV. Residues 438 to 448 are compositionally biased toward pro residues; that stretch reads PVPPGFPPIPG. S455 bears the Phosphoserine mark. Over residues 476–485 the composition is skewed to acidic residues; sequence ALVDDDEESD. 2 stretches are compositionally biased toward low complexity: residues 487 to 498 and 509 to 522; these read PAQAPLAKKPAQ and EPKA…LSPS. Position 583 is a phosphoserine (S583). Phosphothreonine is present on T586. A coiled-coil region spans residues 600–626; that stretch reads LRLSQKAEEVYAQLQKMLQEQQAKCLL. The C2 domain occupies 666 to 805; that stretch reads DPPSHHFELK…EKECEIREIM (140 aa).

The protein belongs to the CC2D1 family. Interacts with CHMP4B.

The protein localises to the nucleus. Transcription factor that binds specifically to the DRE (dual repressor element) and represses HTR1A gene transcription in neuronal cells. The polypeptide is Coiled-coil and C2 domain-containing protein 1B (Cc2d1b) (Mus musculus (Mouse)).